The sequence spans 967 residues: Phosphoenolpyruvate carboxylase (967 aa).

S10 is subject to Phosphoserine. Catalysis depends on residues H171 and K601. A disordered region spans residues 915 to 936 (NASRLPLSRESPEATKPADELV). Basic and acidic residues predominate over residues 924-933 (ESPEATKPAD).

Belongs to the PEPCase type 1 family. Homotetramer. Mg(2+) is required as a cofactor.

The protein resides in the cytoplasm. The catalysed reaction is oxaloacetate + phosphate = phosphoenolpyruvate + hydrogencarbonate. By light-reversible phosphorylation. Functionally, through the carboxylation of phosphoenolpyruvate (PEP) it forms oxaloacetate, a four-carbon dicarboxylic acid source for the tricarboxylic acid cycle. This chain is Phosphoenolpyruvate carboxylase, found in Pisum sativum (Garden pea).